The chain runs to 77 residues: Small ribosomal subunit protein bS20 (77 aa).

Belongs to the bacterial ribosomal protein bS20 family.

Binds directly to 16S ribosomal RNA. The protein is Small ribosomal subunit protein bS20 of Lactococcus lactis subsp. cremoris (strain MG1363).